The chain runs to 74 residues: Protein SlyX homolog (74 aa).

It belongs to the SlyX family.

This Neisseria meningitidis serogroup C (strain 053442) protein is Protein SlyX homolog.